The following is a 307-amino-acid chain: Ribonuclease Z (307 aa).

Positions 63, 65, 67, 68, 141, 208, and 266 each coordinate Zn(2+). The Proton acceptor role is filled by aspartate 67.

This sequence belongs to the RNase Z family. As to quaternary structure, homodimer. Zn(2+) serves as cofactor.

The catalysed reaction is Endonucleolytic cleavage of RNA, removing extra 3' nucleotides from tRNA precursor, generating 3' termini of tRNAs. A 3'-hydroxy group is left at the tRNA terminus and a 5'-phosphoryl group is left at the trailer molecule.. Its function is as follows. Zinc phosphodiesterase, which displays some tRNA 3'-processing endonuclease activity. Probably involved in tRNA maturation, by removing a 3'-trailer from precursor tRNA. This Chlamydia pneumoniae (Chlamydophila pneumoniae) protein is Ribonuclease Z.